A 473-amino-acid chain; its full sequence is Photosystem II CP43 reaction center protein (473 aa).

A propeptide spanning residues 1–14 (MKTLYSLRRYFHVE) is cleaved from the precursor. Thr-15 is subject to N-acetylthreonine. Thr-15 is modified (phosphothreonine). 5 consecutive transmembrane segments (helical) span residues 69–93 (LFEV…PHLA), 134–155 (LIGP…KDKN), 178–200 (KAMY…RVIS), 255–275 (KPFA…LSYS), and 291–312 (WFNN…ASQA). Glu-367 provides a ligand contact to [CaMn4O5] cluster. The helical transmembrane segment at 447 to 471 (RARAAAAGFEKGIDRDTEPVLSMRP) threads the bilayer.

The protein belongs to the PsbB/PsbC family. PsbC subfamily. PSII is composed of 1 copy each of membrane proteins PsbA, PsbB, PsbC, PsbD, PsbE, PsbF, PsbH, PsbI, PsbJ, PsbK, PsbL, PsbM, PsbT, PsbX, PsbY, PsbZ, Psb30/Ycf12, at least 3 peripheral proteins of the oxygen-evolving complex and a large number of cofactors. It forms dimeric complexes. It depends on Binds multiple chlorophylls and provides some of the ligands for the Ca-4Mn-5O cluster of the oxygen-evolving complex. It may also provide a ligand for a Cl- that is required for oxygen evolution. PSII binds additional chlorophylls, carotenoids and specific lipids. as a cofactor.

It localises to the plastid. Its subcellular location is the chloroplast thylakoid membrane. One of the components of the core complex of photosystem II (PSII). It binds chlorophyll and helps catalyze the primary light-induced photochemical processes of PSII. PSII is a light-driven water:plastoquinone oxidoreductase, using light energy to abstract electrons from H(2)O, generating O(2) and a proton gradient subsequently used for ATP formation. This chain is Photosystem II CP43 reaction center protein, found in Ostreococcus tauri.